Reading from the N-terminus, the 76-residue chain is MAPSALLRPFWKLLAPARFPSVSSSRSKFYIQEPPHGSPNWLKVGLTLGTSVFLWIYLIKQHNEDVLEYKRRNGLE.

The transit peptide at 1–27 (MAPSALLRPFWKLLAPARFPSVSSSRS) directs the protein to the mitochondrion. A helical transmembrane segment spans residues 41–59 (WLKVGLTLGTSVFLWIYLI).

It belongs to the complex I NDUFC1 subunit family. As to quaternary structure, complex I is composed of 45 different subunits.

It is found in the mitochondrion inner membrane. Accessory subunit of the mitochondrial membrane respiratory chain NADH dehydrogenase (Complex I), that is believed not to be involved in catalysis. Complex I functions in the transfer of electrons from NADH to the respiratory chain. The immediate electron acceptor for the enzyme is believed to be ubiquinone. This chain is NADH dehydrogenase [ubiquinone] 1 subunit C1, mitochondrial (NDUFC1), found in Bos taurus (Bovine).